Here is a 425-residue protein sequence, read N- to C-terminus: Serine--tRNA ligase (425 aa).

An L-serine-binding site is contributed by 227–229 (TAE). Residues 258–260 (RRE) and valine 274 each bind ATP. Glutamate 281 provides a ligand contact to L-serine. 347–350 (ETHS) is an ATP binding site. Threonine 382 serves as a coordination point for L-serine.

This sequence belongs to the class-II aminoacyl-tRNA synthetase family. Type-1 seryl-tRNA synthetase subfamily. Homodimer. The tRNA molecule binds across the dimer.

It localises to the cytoplasm. The catalysed reaction is tRNA(Ser) + L-serine + ATP = L-seryl-tRNA(Ser) + AMP + diphosphate + H(+). It catalyses the reaction tRNA(Sec) + L-serine + ATP = L-seryl-tRNA(Sec) + AMP + diphosphate + H(+). The protein operates within aminoacyl-tRNA biosynthesis; selenocysteinyl-tRNA(Sec) biosynthesis; L-seryl-tRNA(Sec) from L-serine and tRNA(Sec): step 1/1. Catalyzes the attachment of serine to tRNA(Ser). Is also able to aminoacylate tRNA(Sec) with serine, to form the misacylated tRNA L-seryl-tRNA(Sec), which will be further converted into selenocysteinyl-tRNA(Sec). This Deinococcus radiodurans (strain ATCC 13939 / DSM 20539 / JCM 16871 / CCUG 27074 / LMG 4051 / NBRC 15346 / NCIMB 9279 / VKM B-1422 / R1) protein is Serine--tRNA ligase.